A 794-amino-acid chain; its full sequence is MTEQKKTTIGITGMTCAACANRIEKNLNKLDDVEANVNVTTEKATISYNPESTSADDLTKTIEKTGYGVLNETAELDVIGMTCAACSNRIEKVLNRTDGVDQATVNLTTENATISYNPSATSVDALIKKIQKIGYDAQPKKEVAEKSSQKELELRSKLVKLIISAVLAAPLLLTMLVHLFGIQIPSIFMNPWFQFILATPVQFIIGWQFYVGAYKNLRNGSANMDVLVALGTSAAYFYSLYEMVKWLFNANVMPHLYFETSAVLITLILFGKYLETRAKTQTTNALSELLNLQAKEARVLRDNKEQMIPLNDVVEGDYLIIKPGEKIPVDGKIIKGKTSIDESMLTGESMPVEKVQDDNVIGSTMNKNGSITVKATKVGKDTALASIIKVVEEAQGSKAPIQRLADVISGYFVPIVVGIAVLTFIIWIAFVQQGQFEPALVAAIAVLVIACPCALGLATPTSIMVGTGKAAENGILFKGGEHIERTHQIDTVVLDKTGTITNGKPVVTDFDGDEEALQLLASAEKGSEHPLADAIVNYAQTMNIKLLDTTDFEAVPGRGIKANISGKNLIVGNRQFMNDENVDIKDSEDIMTQFEKSGKTAMLIAINQEYRGMVAVADTVKDSTATAIKQLHDLNIKVVMLTGDNERTAQAIANEVGIDTIIAQVLPEEKAAKIKSLQTQDKTIAMVGDGVNDAPALVQADIGIAIGTGTEVAIEAADVTILGGDLLLIPKAIKASKATIRNIRQNLFWAFGYNVAGIPIAALGLLAPWIAGAAMALSSVSVVTNALRLKRMKL.

HMA domains are found at residues 5 to 70 and 72 to 138; these read KKTT…YGVL and ETAE…YDAQ. Positions 16, 19, 83, and 86 each coordinate Cu(+). Helical transmembrane passes span 162–182, 187–207, 224–244, 250–270, 411–431, and 438–458; these read IISAVLAAPLLLTMLVHLFGI, IFMNPWFQFILATPVQFIIGW, MDVLVALGTSAAYFYSLYEMV, ANVMPHLYFETSAVLITLILF, YFVPIVVGIAVLTFIIWIAFV, and PALVAAIAVLVIACPCALGLA. Aspartate 495 serves as the catalytic 4-aspartylphosphate intermediate. Aspartate 689 and aspartate 693 together coordinate Mg(2+). The next 2 helical transmembrane spans lie at 747 to 766 and 770 to 789; these read LFWAFGYNVAGIPIAALGLL and IAGAAMALSSVSVVTNALRL.

It belongs to the cation transport ATPase (P-type) (TC 3.A.3) family. Type IB subfamily.

The protein localises to the cell membrane. The catalysed reaction is Cu(+)(in) + ATP + H2O = Cu(+)(out) + ADP + phosphate + H(+). Functionally, involved in copper export. The chain is Copper-exporting P-type ATPase (copA) from Staphylococcus saprophyticus subsp. saprophyticus (strain ATCC 15305 / DSM 20229 / NCIMB 8711 / NCTC 7292 / S-41).